Here is a 371-residue protein sequence, read N- to C-terminus: S-adenosylmethionine:tRNA ribosyltransferase-isomerase (371 aa).

It belongs to the QueA family. Monomer.

It localises to the cytoplasm. The enzyme catalyses 7-aminomethyl-7-carbaguanosine(34) in tRNA + S-adenosyl-L-methionine = epoxyqueuosine(34) in tRNA + adenine + L-methionine + 2 H(+). It functions in the pathway tRNA modification; tRNA-queuosine biosynthesis. Its function is as follows. Transfers and isomerizes the ribose moiety from AdoMet to the 7-aminomethyl group of 7-deazaguanine (preQ1-tRNA) to give epoxyqueuosine (oQ-tRNA). This Prochlorococcus marinus (strain MIT 9303) protein is S-adenosylmethionine:tRNA ribosyltransferase-isomerase.